A 285-amino-acid chain; its full sequence is Probable glucose uptake protein GlcU (285 aa).

A run of 10 helical transmembrane segments spans residues phenylalanine 4 to valine 21, glycine 26 to phenylalanine 48, valine 52 to glycine 71, valine 84 to valine 106, tryptophan 110 to leucine 132, isoleucine 153 to valine 175, alanine 180 to phenylalanine 197, isoleucine 210 to glutamine 227, valine 232 to leucine 254, and isoleucine 266 to alanine 283.

This sequence belongs to the GRP transporter (TC 2.A.7.5) family.

It is found in the cell membrane. Its function is as follows. Involved in the uptake of glucose. In Bacillus anthracis, this protein is Probable glucose uptake protein GlcU (glcU).